Consider the following 139-residue polypeptide: Holo-[acyl-carrier-protein] synthase (139 aa).

Mg(2+)-binding residues include Asp8 and Glu61.

Belongs to the P-Pant transferase superfamily. AcpS family. Mg(2+) serves as cofactor.

Its subcellular location is the cytoplasm. It carries out the reaction apo-[ACP] + CoA = holo-[ACP] + adenosine 3',5'-bisphosphate + H(+). Transfers the 4'-phosphopantetheine moiety from coenzyme A to a Ser of acyl-carrier-protein. The chain is Holo-[acyl-carrier-protein] synthase from Rhodopseudomonas palustris (strain BisB5).